The sequence spans 680 residues: DNA ligase (680 aa).

NAD(+)-binding positions include Asp32–Asp36, Ser81–Leu82, and Glu115. The active-site N6-AMP-lysine intermediate is the Lys117. NAD(+) is bound by residues Arg138, Glu175, Lys291, and Lys315. Residues Cys409, Cys412, Cys427, and Cys432 each contribute to the Zn(2+) site. Positions Ala600 to Pro680 constitute a BRCT domain.

It belongs to the NAD-dependent DNA ligase family. LigA subfamily. Mg(2+) is required as a cofactor. The cofactor is Mn(2+).

The enzyme catalyses NAD(+) + (deoxyribonucleotide)n-3'-hydroxyl + 5'-phospho-(deoxyribonucleotide)m = (deoxyribonucleotide)n+m + AMP + beta-nicotinamide D-nucleotide.. Functionally, DNA ligase that catalyzes the formation of phosphodiester linkages between 5'-phosphoryl and 3'-hydroxyl groups in double-stranded DNA using NAD as a coenzyme and as the energy source for the reaction. It is essential for DNA replication and repair of damaged DNA. The polypeptide is DNA ligase (Synechococcus sp. (strain CC9902)).